The chain runs to 173 residues: Large ribosomal subunit protein uL18 (173 aa).

This sequence belongs to the universal ribosomal protein uL18 family. Part of the 50S ribosomal subunit. Contacts the 5S and 23S rRNAs.

Functionally, this is one of the proteins that bind and probably mediate the attachment of the 5S RNA into the large ribosomal subunit, where it forms part of the central protuberance. This chain is Large ribosomal subunit protein uL18, found in Methanococcoides burtonii (strain DSM 6242 / NBRC 107633 / OCM 468 / ACE-M).